The chain runs to 319 residues: NADH-quinone oxidoreductase subunit H 1 (319 aa).

The next 9 membrane-spanning stretches (helical) occupy residues 5 to 25 (ILTAIISTTLIMALLVAAGVF), 78 to 98 (LAPAVAATPVLAGFGVVAFGE), 109 to 129 (VMFLLGMMGLTAYAVVLGALA), 147 to 167 (LAYEAFLGLSMLGVVMIAGSL), 179 to 199 (VWFIVLQPIGAALFTLGGIAA), 214 to 234 (LVGGYITEYTGMSFGLFFLGE), 238 to 258 (ILLVSAFAVTLFFGGWLGPWL), 262 to 282 (IWFGLKTGVIAAMFVWIRAAL), and 294 to 314 (AWKVALPLALANVLITGFIVV).

Belongs to the complex I subunit 1 family. In terms of assembly, NDH-1 is composed of 14 different subunits. Subunits NuoA, H, J, K, L, M, N constitute the membrane sector of the complex.

The protein localises to the cell inner membrane. It carries out the reaction a quinone + NADH + 5 H(+)(in) = a quinol + NAD(+) + 4 H(+)(out). In terms of biological role, NDH-1 shuttles electrons from NADH, via FMN and iron-sulfur (Fe-S) centers, to quinones in the respiratory chain. The immediate electron acceptor for the enzyme in this species is believed to be ubiquinone. Couples the redox reaction to proton translocation (for every two electrons transferred, four hydrogen ions are translocated across the cytoplasmic membrane), and thus conserves the redox energy in a proton gradient. This subunit may bind ubiquinone. This is NADH-quinone oxidoreductase subunit H 1 from Rhodopseudomonas palustris (strain BisA53).